The primary structure comprises 267 residues: tRNA pseudouridine synthase A (267 aa).

The Nucleophile role is filled by aspartate 51. Tyrosine 109 lines the substrate pocket.

This sequence belongs to the tRNA pseudouridine synthase TruA family. In terms of assembly, homodimer.

The catalysed reaction is uridine(38/39/40) in tRNA = pseudouridine(38/39/40) in tRNA. Functionally, formation of pseudouridine at positions 38, 39 and 40 in the anticodon stem and loop of transfer RNAs. This chain is tRNA pseudouridine synthase A, found in Staphylococcus carnosus (strain TM300).